The chain runs to 186 residues: Large ribosomal subunit protein uL22 (186 aa).

The interval 161-186 (VDDEPAKKKLSKKKLQRQKEKMLRSE) is disordered. Residues 177-186 (RQKEKMLRSE) are compositionally biased toward basic and acidic residues.

Belongs to the universal ribosomal protein uL22 family.

This Drosophila pseudoobscura pseudoobscura (Fruit fly) protein is Large ribosomal subunit protein uL22 (RpL17).